Here is a 259-residue protein sequence, read N- to C-terminus: MLTKRIIPCLDIKNGKVVKGINFVGLKEIGDPVEIAKIYEEQCADEIVFLDITASFEEREIIGELIGRAARELSIPLTVGGGIRSINDFRRILASGADKVSINSAAIENPELIHQAANEFGVQCVVVAIDAKANESGSSFEVYIKGGRENTGIDLVEWAKKCEKLGAGEILLTSMDKDGTKTGYDLKMLNAVCSAVNIPVIASGGCGSISDIIEVFEKTKSDAALFASLFHYGEATVDEVKEELIKNRIPARIIKKEII.

Catalysis depends on residues Asp11 and Asp130.

This sequence belongs to the HisA/HisF family. Heterodimer of HisH and HisF.

It is found in the cytoplasm. The enzyme catalyses 5-[(5-phospho-1-deoxy-D-ribulos-1-ylimino)methylamino]-1-(5-phospho-beta-D-ribosyl)imidazole-4-carboxamide + L-glutamine = D-erythro-1-(imidazol-4-yl)glycerol 3-phosphate + 5-amino-1-(5-phospho-beta-D-ribosyl)imidazole-4-carboxamide + L-glutamate + H(+). The protein operates within amino-acid biosynthesis; L-histidine biosynthesis; L-histidine from 5-phospho-alpha-D-ribose 1-diphosphate: step 5/9. Functionally, IGPS catalyzes the conversion of PRFAR and glutamine to IGP, AICAR and glutamate. The HisF subunit catalyzes the cyclization activity that produces IGP and AICAR from PRFAR using the ammonia provided by the HisH subunit. The polypeptide is Imidazole glycerol phosphate synthase subunit HisF (Lactococcus lactis subsp. cremoris (strain SK11)).